We begin with the raw amino-acid sequence, 342 residues long: MSAFTPASEVLLRHSDDFEQSRILFAGDLQDDLPARFECAASRAHTQQFHHWQVLSRQMGDNVRFSLVAQASDVADCDTLIYYWPKNKPEAQFQLMNILSLMPSGVDVFVVGENRSGVRSAEPMLADYAPLNKVDSARRCGLYHGRLEKQPQFSLESWWAEYNIDGLTIKTLPGVFSRDGLDVGSQLLLSTLTPHTKGKVLDVGCGAGVLSAALASHSPKVRLTLCDVSAPAVEASRATLAANGLEGEVFASNVFSEVKGRFDMIISNPPFHDGMQTSLDAAQTLIRGAVRHLNSGGELRIVANAFLPYPKILDETFGFHEVIAQTGRFKVYRTVMTRQAKK.

This sequence belongs to the methyltransferase superfamily. RsmC family. In terms of assembly, monomer.

It is found in the cytoplasm. The enzyme catalyses guanosine(1207) in 16S rRNA + S-adenosyl-L-methionine = N(2)-methylguanosine(1207) in 16S rRNA + S-adenosyl-L-homocysteine + H(+). Functionally, specifically methylates the guanine in position 1207 of 16S rRNA in the 30S particle. The protein is Ribosomal RNA small subunit methyltransferase C of Salmonella enteritidis PT4 (strain P125109).